We begin with the raw amino-acid sequence, 402 residues long: Flavohemoprotein (402 aa).

The 136-residue stretch at 1-136 folds into the Globin domain; sequence MLSAKTIEIV…IADAFISIEA (136 aa). Position 85 (His-85) interacts with heme b. Active-site charge relay system residues include Tyr-95 and Glu-135. A reductase region spans residues 147 to 402; that stretch reads GGWKDFRNFV…EFFGPATSLQ (256 aa). An FAD-binding FR-type domain is found at 150–260; that stretch reads KDFRNFVIVK…SAPAGDFVLN (111 aa). FAD-binding positions include Tyr-188 and 204–207; that span reads RQYS. NADP(+) is bound at residue 273 to 278; the sequence is GVGITP. 394–397 lines the FAD pocket; the sequence is FFGP.

Belongs to the globin family. Two-domain flavohemoproteins subfamily. This sequence in the C-terminal section; belongs to the flavoprotein pyridine nucleotide cytochrome reductase family. Heme b serves as cofactor. The cofactor is FAD.

It carries out the reaction 2 nitric oxide + NADPH + 2 O2 = 2 nitrate + NADP(+) + H(+). The catalysed reaction is 2 nitric oxide + NADH + 2 O2 = 2 nitrate + NAD(+) + H(+). Functionally, is involved in NO detoxification in an aerobic process, termed nitric oxide dioxygenase (NOD) reaction that utilizes O(2) and NAD(P)H to convert NO to nitrate, which protects the bacterium from various noxious nitrogen compounds. Therefore, plays a central role in the inducible response to nitrosative stress. This is Flavohemoprotein from Bacillus cereus (strain ATCC 14579 / DSM 31 / CCUG 7414 / JCM 2152 / NBRC 15305 / NCIMB 9373 / NCTC 2599 / NRRL B-3711).